A 227-amino-acid polypeptide reads, in one-letter code: MFEDIKLIAFDLDGTLLDSVPDLARAVDLAMQDMGYPRVTLEQASHWIGNGADVLVSRALSQNYIVKDDLDAELIKQARARLDQHYHDGGHQLSHLYPDVKDTLERLHQQGYTLALVTNKPSQFVPELLEQHQLTHLFSEVIGGDTFAEKKPNPFALNWLLDKHGLTAPQMLMVGDSKNDIQAAQAAGCHSFALTYGYNHGEPISDSQPDVVSDEFKYLLAVLSMAR.

The active-site Nucleophile is D11. Mg(2+) contacts are provided by D11, D13, and D176.

This sequence belongs to the HAD-like hydrolase superfamily. CbbY/CbbZ/Gph/YieH family. Requires Mg(2+) as cofactor.

It catalyses the reaction 2-phosphoglycolate + H2O = glycolate + phosphate. It functions in the pathway organic acid metabolism; glycolate biosynthesis; glycolate from 2-phosphoglycolate: step 1/1. In terms of biological role, specifically catalyzes the dephosphorylation of 2-phosphoglycolate. Is involved in the dissimilation of the intracellular 2-phosphoglycolate formed during the DNA repair of 3'-phosphoglycolate ends, a major class of DNA lesions induced by oxidative stress. This Aliivibrio fischeri (strain ATCC 700601 / ES114) (Vibrio fischeri) protein is Phosphoglycolate phosphatase.